The chain runs to 269 residues: Imidazoleglycerol-phosphate dehydratase 3, chloroplastic (269 aa).

The N-terminal 51 residues, 1–51 (MTTAPVVSPSLSRLHSAPASPFPKAPVGSGAGVAFPARPYGPSLRLRSAVM), are a transit peptide targeting the chloroplast. Substrate contacts are provided by residues E83, 109-117 (HMLDQLASH), 135-139 (HHSNE), R161, and R183. The Mn(2+) site is built by H109, H135, H136, and E139. Positions 207, 231, 232, and 235 each coordinate Mn(2+). Residues 231–239 (HHIIEATFK) and 261–263 (SSK) contribute to the substrate site.

Belongs to the imidazoleglycerol-phosphate dehydratase family. It depends on Mn(2+) as a cofactor.

The protein resides in the plastid. The protein localises to the chloroplast. It catalyses the reaction D-erythro-1-(imidazol-4-yl)glycerol 3-phosphate = 3-(imidazol-4-yl)-2-oxopropyl phosphate + H2O. It participates in amino-acid biosynthesis; L-histidine biosynthesis; L-histidine from 5-phospho-alpha-D-ribose 1-diphosphate: step 6/9. This Triticum aestivum (Wheat) protein is Imidazoleglycerol-phosphate dehydratase 3, chloroplastic.